The sequence spans 417 residues: Glucose-1-phosphatase (417 aa).

Residues 1 to 23 form the signal peptide; the sequence is MKYKVLTLCLSAALFAPIAPTMA. Residue R41 coordinates substrate. H42 (nucleophile) is an active-site residue. Residues R45, R118, and E220 each contribute to the substrate site. D315 functions as the Proton donor in the catalytic mechanism.

It belongs to the histidine acid phosphatase family. Homodimer.

Its subcellular location is the periplasm. It carries out the reaction alpha-D-glucose 1-phosphate + H2O = D-glucose + phosphate. The sequence is that of Glucose-1-phosphatase (agp) from Providencia rettgeri.